The following is a 188-amino-acid chain: Putative manganese efflux pump MntP (188 aa).

Transmembrane regions (helical) follow at residues L3–A23, I35–V55, W70–G90, W104–F126, M140–F160, and A167–I187.

It belongs to the MntP (TC 9.B.29) family.

The protein localises to the cell inner membrane. Its function is as follows. Probably functions as a manganese efflux pump. This Neisseria meningitidis serogroup C / serotype 2a (strain ATCC 700532 / DSM 15464 / FAM18) protein is Putative manganese efflux pump MntP.